Here is a 452-residue protein sequence, read N- to C-terminus: Phosphoglucosamine mutase (452 aa).

Catalysis depends on Ser-103, which acts as the Phosphoserine intermediate. Mg(2+) contacts are provided by Ser-103, Asp-244, Asp-246, and Asp-248. Phosphoserine is present on Ser-103.

Belongs to the phosphohexose mutase family. The cofactor is Mg(2+). Post-translationally, activated by phosphorylation.

It catalyses the reaction alpha-D-glucosamine 1-phosphate = D-glucosamine 6-phosphate. In terms of biological role, catalyzes the conversion of glucosamine-6-phosphate to glucosamine-1-phosphate. The polypeptide is Phosphoglucosamine mutase (Rhodospirillum rubrum (strain ATCC 11170 / ATH 1.1.1 / DSM 467 / LMG 4362 / NCIMB 8255 / S1)).